The sequence spans 196 residues: Probable GTP-binding protein EngB (196 aa).

An EngB-type G domain is found at 22 to 194 (DKKEIAFAGR…LKTIGEILGD (173 aa)). GTP is bound by residues 30–37 (GRSNVGKS), 56–60 (GKTRS), 74–77 (DLPG), 141–144 (TKSD), and 173–175 (FSS). Mg(2+) contacts are provided by Ser37 and Thr58.

Belongs to the TRAFAC class TrmE-Era-EngA-EngB-Septin-like GTPase superfamily. EngB GTPase family. Mg(2+) is required as a cofactor.

Functionally, necessary for normal cell division and for the maintenance of normal septation. This is Probable GTP-binding protein EngB from Petrotoga mobilis (strain DSM 10674 / SJ95).